The sequence spans 919 residues: Tight junction protein ZO-3 (919 aa).

In terms of domain architecture, PDZ 1 spans 11-93 (TATLSKDPRR…MANITVKRPR (83 aa)). Residues 92–173 (PRRIHLPATK…SPGGGSEANG (82 aa)) are disordered. Ser112 carries the post-translational modification Phosphoserine. Over residues 117–131 (GPQRVEEVDQGRGYD) the composition is skewed to basic and acidic residues. Phosphoserine is present on Ser136. The segment covering 147-163 (RRPRPGRRGRAGSHGRR) has biased composition (basic residues). 4 positions are modified to phosphoserine: Ser164, Ser169, Ser203, and Ser319. One can recognise a PDZ 2 domain in the interval 195–272 (SVLVKRRDSE…KLSLLVLRDR (78 aa)). The tract at residues 279-377 (IPPAVSDSDS…SSQSMEDRGY (99 aa)) is disordered. Phosphothreonine is present on Thr325. Phosphoserine is present on Ser327. Residues 332–360 (PRLRRESSVDSRTISEPDEQRSELPRESS) are compositionally biased toward basic and acidic residues. Position 371 is a phosphoserine (Ser371). A PDZ 3 domain is found at 380-446 (DTRVVRFLKG…LTREEAVQFL (67 aa)). An SH3 domain is found at 475 to 549 (GDSFYIRTHF…PNQSRAEQLA (75 aa)). The Guanylate kinase-like domain maps to 580–761 (LRRGAKKTTQ…WYQELKAIIR (182 aa)). Phosphoserine is present on Ser591. Positions 791 to 801 (ADSSADLSCDS) are enriched in low complexity. Disordered regions lie at residues 791–886 (ADSS…DSMR) and 899–919 (RVHD…ATDL). Residues 812-828 (EGGAYTDGEGYTDGEGG) show a composition bias toward gly residues. A phosphoserine mark is found at Ser856, Ser905, and Ser906.

Belongs to the MAGUK family. In terms of assembly, interacts with occludin OCLN, claudins and TPJ1. Interacts with PATJ. Interacts with UBN1. Interacts with FASLG. Interacts with CCND1. Phosphorylated.

The protein localises to the cell membrane. Its subcellular location is the cell junction. The protein resides in the tight junction. It is found in the nucleus. TJP1, TJP2, and TJP3 are closely related scaffolding proteins that link tight junction (TJ) transmembrane proteins such as claudins, junctional adhesion molecules, and occludin to the actin cytoskeleton. The tight junction acts to limit movement of substances through the paracellular space and as a boundary between the compositionally distinct apical and basolateral plasma membrane domains of epithelial and endothelial cells. Binds and recruits PATJ to tight junctions where it connects and stabilizes apical and lateral components of tight junctions. Promotes cell-cycle progression through the sequestration of cyclin D1 (CCND1) at tight junctions during mitosis which prevents CCND1 degradation during M-phase and enables S-phase transition. With TJP1 and TJP2, participates in the junctional retention and stability of the transcription factor DBPA, but is not involved in its shuttling to the nucleus. Contrary to TJP2, TJP3 is dispensable for individual viability, embryonic development, epithelial differentiation, and the establishment of TJs, at least in the laboratory environment. The protein is Tight junction protein ZO-3 (TJP3) of Homo sapiens (Human).